The sequence spans 428 residues: F-box/LRR-repeat protein 3 (428 aa).

Over residues 1-21 (MKRGGRDSDRNSSEEGTAEKS) the composition is skewed to basic and acidic residues. A disordered region spans residues 1-27 (MKRGGRDSDRNSSEEGTAEKSKKLRTT). The region spanning 34–81 (CDWGNLLQDIILQVFKYLPLLDRAHASQVCRNWNQVFHMPDLWRCFEF) is the F-box domain. 7 LRR repeats span residues 119–146 (SSKE…GLIS), 181–207 (DTPV…KMSS), 208–233 (CPHV…ALNY), 234–259 (HLLS…RIDV), 316–341 (GRSV…VVCA), 343–368 (GLRP…GLGE), and 369–394 (CEVS…SIME).

Part of the SCF (SKP1-CUL1-F-box) E3 ubiquitin-protein ligase complex SCF(FBXL3) composed of CUL1, SKP1, RBX1 and FBXL3. Interacts with CRY1 and CRY2 (phosphorylated). Interacts with HDAC3. Interacts with KDM8. Post-translationally, undergoes autophagy-mediated degradation in the liver in a time-dependent manner. Widely expressed.

The protein resides in the nucleus. The protein localises to the cytoplasm. It participates in protein modification; protein ubiquitination. Its function is as follows. Substrate-recognition component of the SCF(FBXL3) E3 ubiquitin ligase complex involved in circadian rhythm function. Plays a key role in the maintenance of both the speed and the robustness of the circadian clock oscillation. The SCF(FBXL3) complex mainly acts in the nucleus and mediates ubiquitination and subsequent degradation of CRY1 and CRY2. Activity of the SCF(FBXL3) complex is counteracted by the SCF(FBXL21) complex. This Homo sapiens (Human) protein is F-box/LRR-repeat protein 3 (FBXL3).